The sequence spans 82 residues: UPF0154 protein SPD_1662 (82 aa).

The chain crosses the membrane as a helical span at residues 5–25 (LAIVLIVLAFLGGALGGMYLV).

It belongs to the UPF0154 family.

It is found in the cell membrane. In Streptococcus pneumoniae serotype 2 (strain D39 / NCTC 7466), this protein is UPF0154 protein SPD_1662.